Here is a 432-residue protein sequence, read N- to C-terminus: D-amino acid dehydrogenase (432 aa).

Residue 3–17 coordinates FAD; sequence VVILGSGVVGVASAW.

Belongs to the DadA oxidoreductase family. The cofactor is FAD.

It carries out the reaction a D-alpha-amino acid + A + H2O = a 2-oxocarboxylate + AH2 + NH4(+). Its pathway is amino-acid degradation; D-alanine degradation; NH(3) and pyruvate from D-alanine: step 1/1. Its function is as follows. Oxidative deamination of D-amino acids. The protein is D-amino acid dehydrogenase of Shigella dysenteriae serotype 1 (strain Sd197).